Consider the following 201-residue polypeptide: MKEFKAVFPKALIIFMIFTILCGGIYTIFITGISQLIFPKQANGSIIEVNGKKYGSVLLAQQYNDEKHLWGRIMNIDTDTFVDDNGKKLAYSAPSNLSPASKEYEALVKERVDKIKANHPEQDDKAIPVDLVTCSGSGLDPHISVAAAKYQVNRIAKNNNMKIKDVEKIIDKYTSGKLFGVLGEKTVNVLEVNLAIDGILK.

Residues 13 to 33 traverse the membrane as a helical segment; that stretch reads IIFMIFTILCGGIYTIFITGI.

Belongs to the KdpC family. The system is composed of three essential subunits: KdpA, KdpB and KdpC.

The protein localises to the cell membrane. Functionally, part of the high-affinity ATP-driven potassium transport (or Kdp) system, which catalyzes the hydrolysis of ATP coupled with the electrogenic transport of potassium into the cytoplasm. This subunit acts as a catalytic chaperone that increases the ATP-binding affinity of the ATP-hydrolyzing subunit KdpB by the formation of a transient KdpB/KdpC/ATP ternary complex. This Clostridium botulinum (strain Eklund 17B / Type B) protein is Potassium-transporting ATPase KdpC subunit.